The primary structure comprises 450 residues: 3-phosphoshikimate 1-carboxyvinyltransferase (450 aa).

Residues lysine 28, serine 29, and arginine 33 each contribute to the 3-phosphoshikimate site. Lysine 28 is a binding site for phosphoenolpyruvate. Phosphoenolpyruvate-binding residues include glycine 100 and arginine 128. 3-phosphoshikimate-binding residues include serine 173, glutamine 175, aspartate 326, and lysine 353. Glutamine 175 provides a ligand contact to phosphoenolpyruvate. Residue aspartate 326 is the Proton acceptor of the active site. Residues arginine 357 and arginine 402 each coordinate phosphoenolpyruvate.

Belongs to the EPSP synthase family. Monomer.

The protein localises to the cytoplasm. It carries out the reaction 3-phosphoshikimate + phosphoenolpyruvate = 5-O-(1-carboxyvinyl)-3-phosphoshikimate + phosphate. Its pathway is metabolic intermediate biosynthesis; chorismate biosynthesis; chorismate from D-erythrose 4-phosphate and phosphoenolpyruvate: step 6/7. Its function is as follows. Catalyzes the transfer of the enolpyruvyl moiety of phosphoenolpyruvate (PEP) to the 5-hydroxyl of shikimate-3-phosphate (S3P) to produce enolpyruvyl shikimate-3-phosphate and inorganic phosphate. The sequence is that of 3-phosphoshikimate 1-carboxyvinyltransferase from Brucella canis (strain ATCC 23365 / NCTC 10854 / RM-666).